The sequence spans 191 residues: MLSSIKCVLVGDSAVGKTSLLVRFTSETFPEAYKPTVYENTGVDVFMDGIQISLGLWDTAGNDAFRSIRPLSYQQADVVLMCYSVANHNSFLNLKNKWISEIRSNLPCTPVLVVATQTDQREVGPHRASCINAIEGKRLAQDVRAKGYLECSALSNRGVQQVFECAVRTAVNQARRRNRRKLFSINECKIF.

Glycine 11 to threonine 18 is a GTP binding site. Positions tyrosine 33 to threonine 41 match the Effector region motif. GTP is bound at residue aspartate 58–asparagine 62. Residues tyrosine 73–alanine 86 form an interaction with ZAP70 region. Residue threonine 116–aspartate 119 participates in GTP binding. Cysteine 188 is modified (cysteine methyl ester). The S-geranylgeranyl cysteine moiety is linked to residue cysteine 188. Positions lysine 189 to phenylalanine 191 are cleaved as a propeptide — removed in mature form.

Belongs to the small GTPase superfamily. Rho family. Interacts with GDI1 and GDI2. Interacts with ZAP70 (via SH2 domains) and the interaction is enhanced by its phosphorylation by LCK. Interacts with SYK and the interaction is enhanced by its phosphorylation by FYN. In terms of processing, phosphorylated on tyrosine by LCK. Phosphorylated by FYN. Phosphorylation enhances the interactions with ZAP70 and SYK and is critical for its function in thymocyte development. As to expression, expression is widespread in hematopoietic cells, including in bone marrow progenitor cells and in differentiated myeloid as well as lymphoid cells. Expressed at high levels in the thymus and mast cells, found in spleen and low-density bone marrow (LDBM) cells and is detected at a low level in neutrophils. In the thymus it is detected in thymocytes of the thymic cortex but not in non-lymphoid cells of fibrovascular and fibroadipose tissues. Expressed in T-cells, B-cells and mast cells.

The protein resides in the cytoplasm. It is found in the cell membrane. Binds GTP but lacks intrinsic GTPase activity and is resistant to Rho-specific GTPase-activating proteins. Inhibits the activation of NF-kappa-B by TNF and IKKB and the activation of CRK/p38 by TNF. Inhibits activities of RAC1, RHOA and CDC42. Negatively regulates leukotriene production in neutrophils. Negative regulator of hematopoietic progenitor cell proliferation, survival and migration. Critical regulator of thymocyte development and T-cell antigen receptor (TCR) signaling by mediating recruitment and activation of ZAP70. Required for phosphorylation of CD3Z, membrane translocation of ZAP70 and subsequent activation of the ZAP70-mediated pathways. Essential for efficient beta-selection and positive selection by promoting the ZAP70-dependent phosphorylation of the LAT signalosome during pre-TCR and TCR signaling. Crucial for thymocyte maturation during DN3 to DN4 transition and during positive selection. Plays critical roles in mast cell function by facilitating phosphorylation of SYK in Fc epsilon RI-mediated signal transduction. Essential for the phosphorylation of LAT, LCP2, PLCG1 and PLCG2 and for Ca(2+) mobilization in mast cells. The chain is Rho-related GTP-binding protein RhoH (Rhoh) from Mus musculus (Mouse).